The chain runs to 540 residues: Glucose-6-phosphate isomerase (540 aa).

Glu-350 acts as the Proton donor in catalysis. Residues His-381 and Lys-503 contribute to the active site.

The protein belongs to the GPI family.

It is found in the cytoplasm. It carries out the reaction alpha-D-glucose 6-phosphate = beta-D-fructose 6-phosphate. It participates in carbohydrate biosynthesis; gluconeogenesis. Its pathway is carbohydrate degradation; glycolysis; D-glyceraldehyde 3-phosphate and glycerone phosphate from D-glucose: step 2/4. Functionally, catalyzes the reversible isomerization of glucose-6-phosphate to fructose-6-phosphate. The chain is Glucose-6-phosphate isomerase from Paraburkholderia phymatum (strain DSM 17167 / CIP 108236 / LMG 21445 / STM815) (Burkholderia phymatum).